A 256-amino-acid chain; its full sequence is Imidazole glycerol phosphate synthase subunit HisF (256 aa).

Catalysis depends on residues Asp-12 and Asp-131.

It belongs to the HisA/HisF family. In terms of assembly, heterodimer of HisH and HisF.

The protein resides in the cytoplasm. The enzyme catalyses 5-[(5-phospho-1-deoxy-D-ribulos-1-ylimino)methylamino]-1-(5-phospho-beta-D-ribosyl)imidazole-4-carboxamide + L-glutamine = D-erythro-1-(imidazol-4-yl)glycerol 3-phosphate + 5-amino-1-(5-phospho-beta-D-ribosyl)imidazole-4-carboxamide + L-glutamate + H(+). It participates in amino-acid biosynthesis; L-histidine biosynthesis; L-histidine from 5-phospho-alpha-D-ribose 1-diphosphate: step 5/9. In terms of biological role, IGPS catalyzes the conversion of PRFAR and glutamine to IGP, AICAR and glutamate. The HisF subunit catalyzes the cyclization activity that produces IGP and AICAR from PRFAR using the ammonia provided by the HisH subunit. This Pseudomonas fluorescens (strain SBW25) protein is Imidazole glycerol phosphate synthase subunit HisF.